The sequence spans 358 residues: Alanine racemase (358 aa).

The active-site Proton acceptor; specific for D-alanine is Lys35. Lys35 bears the N6-(pyridoxal phosphate)lysine mark. Arg130 lines the substrate pocket. The active-site Proton acceptor; specific for L-alanine is the Tyr255. Substrate is bound at residue Met303.

Belongs to the alanine racemase family. Pyridoxal 5'-phosphate is required as a cofactor.

The enzyme catalyses L-alanine = D-alanine. It participates in amino-acid biosynthesis; D-alanine biosynthesis; D-alanine from L-alanine: step 1/1. Catalyzes the interconversion of L-alanine and D-alanine. May also act on other amino acids. The polypeptide is Alanine racemase (alr) (Shewanella woodyi (strain ATCC 51908 / MS32)).